Consider the following 588-residue polypeptide: Arginine--tRNA ligase (588 aa).

The 'HIGH' region signature appears at proline 129–histidine 139.

This sequence belongs to the class-I aminoacyl-tRNA synthetase family. In terms of assembly, monomer.

The protein resides in the cytoplasm. It carries out the reaction tRNA(Arg) + L-arginine + ATP = L-arginyl-tRNA(Arg) + AMP + diphosphate. The chain is Arginine--tRNA ligase from Frankia casuarinae (strain DSM 45818 / CECT 9043 / HFP020203 / CcI3).